The sequence spans 207 residues: Putative tributyltin chloride resistance protein (207 aa).

The segment at 37 to 122 (NLPIELALMP…YHAIAALNLG (86 aa)) is slt-type domain. Glu49 is an active-site residue.

It belongs to the transglycosylase Slt family.

In Alteromonas sp. (strain M-1), this protein is Putative tributyltin chloride resistance protein (tbtA).